A 40-amino-acid polypeptide reads, in one-letter code: Photosystem II reaction center protein J (40 aa).

The chain crosses the membrane as a helical span at residues 8–28 (IPLWIIGTVTGIPVIGLIGIF).

This sequence belongs to the PsbJ family. PSII is composed of 1 copy each of membrane proteins PsbA, PsbB, PsbC, PsbD, PsbE, PsbF, PsbH, PsbI, PsbJ, PsbK, PsbL, PsbM, PsbT, PsbX, PsbY, PsbZ, Psb30/Ycf12, at least 3 peripheral proteins of the oxygen-evolving complex and a large number of cofactors. It forms dimeric complexes.

The protein localises to the plastid. Its subcellular location is the chloroplast thylakoid membrane. Its function is as follows. One of the components of the core complex of photosystem II (PSII). PSII is a light-driven water:plastoquinone oxidoreductase that uses light energy to abstract electrons from H(2)O, generating O(2) and a proton gradient subsequently used for ATP formation. It consists of a core antenna complex that captures photons, and an electron transfer chain that converts photonic excitation into a charge separation. The protein is Photosystem II reaction center protein J of Citrus sinensis (Sweet orange).